The primary structure comprises 339 residues: Dihydroorotate dehydrogenase (quinone) (339 aa).

FMN contacts are provided by residues 62–66 (AGMDK) and threonine 86. Lysine 66 serves as a coordination point for substrate. 111–115 (NRMGF) provides a ligand contact to substrate. FMN contacts are provided by asparagine 139 and asparagine 172. Residue asparagine 172 coordinates substrate. Catalysis depends on serine 175, which acts as the Nucleophile. Asparagine 177 contacts substrate. FMN-binding residues include lysine 217 and threonine 245. Position 246 to 247 (246 to 247 (NT)) interacts with substrate. FMN contacts are provided by residues glycine 268, glycine 297, and 318-319 (YS).

Belongs to the dihydroorotate dehydrogenase family. Type 2 subfamily. As to quaternary structure, monomer. It depends on FMN as a cofactor.

It localises to the cell membrane. The catalysed reaction is (S)-dihydroorotate + a quinone = orotate + a quinol. It participates in pyrimidine metabolism; UMP biosynthesis via de novo pathway; orotate from (S)-dihydroorotate (quinone route): step 1/1. Catalyzes the conversion of dihydroorotate to orotate with quinone as electron acceptor. This is Dihydroorotate dehydrogenase (quinone) from Shewanella baltica (strain OS185).